Consider the following 338-residue polypeptide: Lipoyl synthase (338 aa).

Positions 1–24 are disordered; sequence MTTVQEAVPNLIPTQDATPRPAPK. [4Fe-4S] cluster contacts are provided by C84, C89, C95, C110, C114, C117, and S324. A Radical SAM core domain is found at 96–313; sequence FSGGTATFMI…AEEGYKMGFK (218 aa).

The protein belongs to the radical SAM superfamily. Lipoyl synthase family. It depends on [4Fe-4S] cluster as a cofactor.

The protein resides in the cytoplasm. The catalysed reaction is [[Fe-S] cluster scaffold protein carrying a second [4Fe-4S](2+) cluster] + N(6)-octanoyl-L-lysyl-[protein] + 2 oxidized [2Fe-2S]-[ferredoxin] + 2 S-adenosyl-L-methionine + 4 H(+) = [[Fe-S] cluster scaffold protein] + N(6)-[(R)-dihydrolipoyl]-L-lysyl-[protein] + 4 Fe(3+) + 2 hydrogen sulfide + 2 5'-deoxyadenosine + 2 L-methionine + 2 reduced [2Fe-2S]-[ferredoxin]. Its pathway is protein modification; protein lipoylation via endogenous pathway; protein N(6)-(lipoyl)lysine from octanoyl-[acyl-carrier-protein]: step 2/2. In terms of biological role, catalyzes the radical-mediated insertion of two sulfur atoms into the C-6 and C-8 positions of the octanoyl moiety bound to the lipoyl domains of lipoate-dependent enzymes, thereby converting the octanoylated domains into lipoylated derivatives. This chain is Lipoyl synthase, found in Pseudomonas putida (strain ATCC 700007 / DSM 6899 / JCM 31910 / BCRC 17059 / LMG 24140 / F1).